A 285-amino-acid polypeptide reads, in one-letter code: 2,3,4,5-tetrahydropyridine-2,6-dicarboxylate N-succinyltransferase (285 aa).

Substrate contacts are provided by arginine 111 and aspartate 148.

The protein belongs to the transferase hexapeptide repeat family. Homotrimer.

The protein localises to the cytoplasm. It catalyses the reaction (S)-2,3,4,5-tetrahydrodipicolinate + succinyl-CoA + H2O = (S)-2-succinylamino-6-oxoheptanedioate + CoA. The protein operates within amino-acid biosynthesis; L-lysine biosynthesis via DAP pathway; LL-2,6-diaminopimelate from (S)-tetrahydrodipicolinate (succinylase route): step 1/3. The chain is 2,3,4,5-tetrahydropyridine-2,6-dicarboxylate N-succinyltransferase from Sinorhizobium medicae (strain WSM419) (Ensifer medicae).